Reading from the N-terminus, the 194-residue chain is Peptidyl-tRNA hydrolase (194 aa).

Y16 is a binding site for tRNA. Catalysis depends on H21, which acts as the Proton acceptor. Y67, N69, and N115 together coordinate tRNA.

This sequence belongs to the PTH family. As to quaternary structure, monomer.

It is found in the cytoplasm. The catalysed reaction is an N-acyl-L-alpha-aminoacyl-tRNA + H2O = an N-acyl-L-amino acid + a tRNA + H(+). In terms of biological role, hydrolyzes ribosome-free peptidyl-tRNAs (with 1 or more amino acids incorporated), which drop off the ribosome during protein synthesis, or as a result of ribosome stalling. Catalyzes the release of premature peptidyl moieties from peptidyl-tRNA molecules trapped in stalled 50S ribosomal subunits, and thus maintains levels of free tRNAs and 50S ribosomes. This chain is Peptidyl-tRNA hydrolase, found in Synechocystis sp. (strain ATCC 27184 / PCC 6803 / Kazusa).